The chain runs to 307 residues: Taste receptor type 2 member 10 (307 aa).

Topologically, residues 1–6 (MLRVVE) are extracellular. Residues 7-27 (GIFIFVVVSESVFGVLGNGFI) traverse the membrane as a helical segment. Residues 28 to 42 (GLVNCIDCAKNKLST) lie on the Cytoplasmic side of the membrane. Residues 43–63 (IGFILTGLAISRIFLIWIIIT) traverse the membrane as a helical segment. Residues 64 to 100 (DGFIQIFSPNIYASGNLIEYISYFWVIGNQSSMWFAT) are Extracellular-facing. An N-linked (GlcNAc...) asparagine glycan is attached at asparagine 92. The helical transmembrane segment at 101–121 (SLSIFYFLKIANFSNYIFLWL) threads the bilayer. The Cytoplasmic portion of the chain corresponds to 122-126 (KSRTN). A helical transmembrane segment spans residues 127–147 (MVLPFMIVFLLISSLLNFAYI). Topologically, residues 148–179 (AKILNDYKTKNDTVWDLNMYKSEYFIKQILLN) are extracellular. Residue asparagine 158 is glycosylated (N-linked (GlcNAc...) asparagine). The chain crosses the membrane as a helical span at residues 180–200 (LGVIFFFTLSLITCIFLIISL). Residues 201–227 (WRHNRQMQSNVTGLRDSNTEAHVKAMK) lie on the Cytoplasmic side of the membrane. Residues 228 to 248 (VLISFIILFILYFIGMAIEIS) traverse the membrane as a helical segment. The Extracellular portion of the chain corresponds to 249 to 257 (CFTVRENKL). The helical transmembrane segment at 258 to 278 (LLMFGMTTTAIYPWGHSFILI) threads the bilayer. Residues 279–307 (LGNSKLKQASLRVLQQLKCCEKRKNLRVT) lie on the Cytoplasmic side of the membrane.

Belongs to the G-protein coupled receptor T2R family. As to expression, expressed in subsets of taste receptor cells of the tongue and palate epithelium and exclusively in gustducin-positive cells.

Its subcellular location is the membrane. Its function is as follows. Gustducin-coupled strychnine receptor implicated in the perception of bitter compounds in the oral cavity and the gastrointestinal tract. Signals through PLCB2 and the calcium-regulated cation channel TRPM5. In Homo sapiens (Human), this protein is Taste receptor type 2 member 10 (TAS2R10).